Here is a 471-residue protein sequence, read N- to C-terminus: ATP synthase subunit beta (471 aa).

G153–T160 contacts ATP.

The protein belongs to the ATPase alpha/beta chains family. In terms of assembly, F-type ATPases have 2 components, CF(1) - the catalytic core - and CF(0) - the membrane proton channel. CF(1) has five subunits: alpha(3), beta(3), gamma(1), delta(1), epsilon(1). CF(0) has four main subunits: a(1), b(1), b'(1) and c(9-12).

It localises to the cell membrane. It catalyses the reaction ATP + H2O + 4 H(+)(in) = ADP + phosphate + 5 H(+)(out). Produces ATP from ADP in the presence of a proton gradient across the membrane. The catalytic sites are hosted primarily by the beta subunits. This Chloroflexus aurantiacus (strain ATCC 29364 / DSM 637 / Y-400-fl) protein is ATP synthase subunit beta.